Here is a 203-residue protein sequence, read N- to C-terminus: Imidazoleglycerol-phosphate dehydratase (203 aa).

The protein belongs to the imidazoleglycerol-phosphate dehydratase family.

The protein resides in the cytoplasm. The enzyme catalyses D-erythro-1-(imidazol-4-yl)glycerol 3-phosphate = 3-(imidazol-4-yl)-2-oxopropyl phosphate + H2O. It participates in amino-acid biosynthesis; L-histidine biosynthesis; L-histidine from 5-phospho-alpha-D-ribose 1-diphosphate: step 6/9. The sequence is that of Imidazoleglycerol-phosphate dehydratase from Salinispora tropica (strain ATCC BAA-916 / DSM 44818 / JCM 13857 / NBRC 105044 / CNB-440).